A 284-amino-acid chain; its full sequence is uncharacterized protein (284 aa).

Helical transmembrane passes span 174 to 194, 217 to 237, and 241 to 261; these read LFVL…YISI, MLIP…PGTA, and LIVL…SGSC.

It is found in the membrane. This is an uncharacterized protein from Saccharomyces cerevisiae (strain ATCC 204508 / S288c) (Baker's yeast).